The sequence spans 202 residues: UPF0102 protein Dde_1093 (202 aa).

Belongs to the UPF0102 family.

The sequence is that of UPF0102 protein Dde_1093 from Oleidesulfovibrio alaskensis (strain ATCC BAA-1058 / DSM 17464 / G20) (Desulfovibrio alaskensis).